A 144-amino-acid polypeptide reads, in one-letter code: Large ribosomal subunit protein uL13 (144 aa).

This sequence belongs to the universal ribosomal protein uL13 family. Part of the 50S ribosomal subunit.

Functionally, this protein is one of the early assembly proteins of the 50S ribosomal subunit, although it is not seen to bind rRNA by itself. It is important during the early stages of 50S assembly. The sequence is that of Large ribosomal subunit protein uL13 from Herpetosiphon aurantiacus (strain ATCC 23779 / DSM 785 / 114-95).